A 448-amino-acid chain; its full sequence is uncharacterized protein (448 aa).

A compositionally biased stretch (basic and acidic residues) spans 187 to 198 (SKGDRGDADDRG). Disordered regions lie at residues 187 to 221 (SKGDRGDADDRGPASVGSGGAPARGAGQQPELPTR), 243 to 270 (LQVPGGTSAAIPSASSTPSLPNLGGATM), and 291 to 361 (LSGL…LPNG). The segment covering 243–261 (LQVPGGTSAAIPSASSTPS) has biased composition (low complexity). The segment covering 307–334 (FDERGQEVRDPADYEHANEPDERRADDR) has biased composition (basic and acidic residues).

The protein to M.tuberculosis Rv0025 and Rv0739.

This is an uncharacterized protein from Mycobacterium tuberculosis (strain CDC 1551 / Oshkosh).